Consider the following 31-residue polypeptide: Photosystem II reaction center protein T (31 aa).

At Met1 the chain carries N-formylmethionine. The chain crosses the membrane as a helical span at residues 3–23 (SVAYILVLTMALAVLFFAIAF).

Belongs to the PsbT family. PSII is composed of 1 copy each of membrane proteins PsbA, PsbB, PsbC, PsbD, PsbE, PsbF, PsbH, PsbI, PsbJ, PsbK, PsbL, PsbM, PsbT, PsbX, PsbY, PsbZ, Psb30/Ycf12, peripheral proteins PsbO, CyanoQ (PsbQ), PsbU, PsbV and a large number of cofactors. It forms dimeric complexes.

It is found in the cellular thylakoid membrane. Its function is as follows. Found at the monomer-monomer interface of the photosystem II (PS II) dimer, plays a role in assembly and dimerization of PSII. PSII is a light-driven water plastoquinone oxidoreductase, using light energy to abstract electrons from H(2)O, generating a proton gradient subsequently used for ATP formation. This chain is Photosystem II reaction center protein T, found in Synechocystis sp. (strain ATCC 27184 / PCC 6803 / Kazusa).